The primary structure comprises 60 residues: MRLHHLLLALLFLVLSAGSGISGPLSCRRNGGVCIPIRCPGPMRQIGTCFGRPVKCCRSW.

The N-terminal stretch at 1-22 (MRLHHLLLALLFLVLSAGSGIS) is a signal peptide. Disulfide bonds link cysteine 27-cysteine 56, cysteine 34-cysteine 49, and cysteine 39-cysteine 57.

It belongs to the beta-defensin family. In terms of tissue distribution, neutrophilic granules.

The protein resides in the secreted. Has bactericidal activity. Active against E.coli ML35 and S.aureus 502A. This Bos taurus (Bovine) protein is Beta-defensin 11 (DEFB11).